A 352-amino-acid chain; its full sequence is Farnesyl pyrophosphate synthase (352 aa).

Lys-52, Arg-55, and Gln-93 together coordinate isopentenyl diphosphate. Mg(2+) contacts are provided by Asp-100 and Asp-104. Arg-109 lines the dimethylallyl diphosphate pocket. Arg-110 provides a ligand contact to isopentenyl diphosphate. The dimethylallyl diphosphate site is built by Lys-197, Thr-198, Gln-237, Lys-254, and Lys-263.

This sequence belongs to the FPP/GGPP synthase family. The cofactor is Mg(2+).

It carries out the reaction isopentenyl diphosphate + dimethylallyl diphosphate = (2E)-geranyl diphosphate + diphosphate. The catalysed reaction is isopentenyl diphosphate + (2E)-geranyl diphosphate = (2E,6E)-farnesyl diphosphate + diphosphate. It functions in the pathway isoprenoid biosynthesis; farnesyl diphosphate biosynthesis; farnesyl diphosphate from geranyl diphosphate and isopentenyl diphosphate: step 1/1. It participates in isoprenoid biosynthesis; geranyl diphosphate biosynthesis; geranyl diphosphate from dimethylallyl diphosphate and isopentenyl diphosphate: step 1/1. Its function is as follows. Farnesyl pyrophosphate synthase; part of the second module of ergosterol biosynthesis pathway that includes the middle steps of the pathway. ERG20 catalyzes the sequential condensation of isopentenyl pyrophosphate with dimethylallyl pyrophosphate, and then with the resultant geranylpyrophosphate to the ultimate product farnesyl pyrophosphate. The second module is carried out in the vacuole and involves the formation of farnesyl diphosphate, which is also an important intermediate in the biosynthesis of ubiquinone, dolichol, heme and prenylated proteins. Activity by the mevalonate kinase ERG12 first converts mevalonate into 5-phosphomevalonate. 5-phosphomevalonate is then further converted to 5-diphosphomevalonate by the phosphomevalonate kinase ERG8. The diphosphomevalonate decarboxylase MVD1/ERG19 then produces isopentenyl diphosphate. The isopentenyl-diphosphate delta-isomerase IDI1 then catalyzes the 1,3-allylic rearrangement of the homoallylic substrate isopentenyl (IPP) to its highly electrophilic allylic isomer, dimethylallyl diphosphate (DMAPP). Finally the farnesyl diphosphate synthase ERG20 catalyzes the sequential condensation of isopentenyl pyrophosphate with dimethylallyl pyrophosphate, and then with the resultant geranylpyrophosphate to the ultimate product farnesyl pyrophosphate. In Saccharomyces cerevisiae (strain ATCC 204508 / S288c) (Baker's yeast), this protein is Farnesyl pyrophosphate synthase (ERG20).